Reading from the N-terminus, the 235-residue chain is Uridylate kinase (235 aa).

9–12 contacts ATP; it reads KLSG. The interval 17–22 is involved in allosteric activation by GTP; that stretch reads GKDGYG. Gly-51 is a binding site for UMP. Positions 52 and 56 each coordinate ATP. Residues Asp-71 and 132-139 contribute to the UMP site; that span reads TGNPYFTT. Positions 159, 165, and 168 each coordinate ATP.

This sequence belongs to the UMP kinase family. Homohexamer.

The protein resides in the cytoplasm. The enzyme catalyses UMP + ATP = UDP + ADP. The protein operates within pyrimidine metabolism; CTP biosynthesis via de novo pathway; UDP from UMP (UMPK route): step 1/1. With respect to regulation, allosterically activated by GTP. Inhibited by UTP. In terms of biological role, catalyzes the reversible phosphorylation of UMP to UDP. In Chlorobium luteolum (strain DSM 273 / BCRC 81028 / 2530) (Pelodictyon luteolum), this protein is Uridylate kinase.